The following is a 553-amino-acid chain: Aminotransferase FUM8 (553 aa).

A signal peptide spans 1-25 (MSPAPAILALRRVYNFCLLVDEAHG). Residue N480 is glycosylated (N-linked (GlcNAc...) asparagine).

It belongs to the class-II pyridoxal-phosphate-dependent aminotransferase family. BioF subfamily. Pyridoxal 5'-phosphate serves as cofactor.

Its subcellular location is the endoplasmic reticulum. It participates in mycotoxin biosynthesis. Aminotransferase; part of the gene cluster that mediates the biosynthesis of fumonisins B1 (FB1), B2 (FB2), B3 (FB3), and B4 (FB4), which are carcinogenic mycotoxins. Within the pathway, FUM8 catalyzes the release of the C-18 polyketide chain from the highly reducing polyketide synthase FUM1 by a nucleophilic attack of a carbanion, which is derived from R-carbon of alanine by decarboxylation, on the carbonyl carbon of polyketide acyl chain. The biosynthesis starts with the FUM1-catalyzed carbon chain assembly from one molecule of acetyl-CoA, eight molecules of malonyl-CoA, and two molecules of methionine (in S-adenosyl form). The C18 polyketide chain is released from the enzyme by a nucleophilic attack of a carbanion, which is derived from R-carbon of alanine by decarboxylation, on the carbonyl carbon of polyketide acyl chain. This step is catalyzed by the pyridoxal 5'-phosphate-dependent aminoacyl transferase FUM8. The resultant 3-keto intermediate is then stereospecifically reduced to a 3-hydroxyl product by reductase FUM13. Subsequent oxidations at C-10 by the cytochrome P450 monooxygenase FUM2, C-14 and C-15 by FUM6, FUM12 or FUM15, tricarballylic esterification of the hydroxyl groups on C-14 and C-15 by acyltransferase FUM14, and C-5 hydroxylation by 2-keto-glutarate-dependent dioxygenase FUM3 furnish the biosynthesis of fumonisins. The tricarballylic moieties are most likely derived from the citric acid cycle, and their addition to the carbon backbone may involve FUM7, FUM10, FUM11 and FUM14. In Gibberella moniliformis (strain M3125 / FGSC 7600) (Maize ear and stalk rot fungus), this protein is Aminotransferase FUM8.